Here is a 198-residue protein sequence, read N- to C-terminus: MTLSKNENIKAKQKQINLPKILRQEIKENNKIIKWFYNIVMLLGGIGFLIVGISSYIGNNLIYFLDASEIIFFPQGITMCFYGTCGILFSINQISIILNGVGEGYNEFNKELNLMTIYRKGKQGKNSDINITYSLKDIEGIRIEIKNEYFNVKQNVFLRIKDKNDLPIIQLSNPIKISDLEKQASEIASFLNVPIKGY.

2 helical membrane-spanning segments follow: residues 35 to 57 (WFYN…SSYI) and 70 to 92 (IIFF…FSIN).

It belongs to the Ycf4 family.

Its subcellular location is the plastid. The protein resides in the chloroplast thylakoid membrane. Seems to be required for the assembly of the photosystem I complex. The chain is Photosystem I assembly protein Ycf4 from Euglena gracilis.